The chain runs to 434 residues: Serine hydroxymethyltransferase (434 aa).

(6S)-5,6,7,8-tetrahydrofolate contacts are provided by residues leucine 131 and 135-137 (GHL). N6-(pyridoxal phosphate)lysine is present on lysine 240.

The protein belongs to the SHMT family. Homodimer. Pyridoxal 5'-phosphate serves as cofactor.

It is found in the cytoplasm. The catalysed reaction is (6R)-5,10-methylene-5,6,7,8-tetrahydrofolate + glycine + H2O = (6S)-5,6,7,8-tetrahydrofolate + L-serine. Its pathway is one-carbon metabolism; tetrahydrofolate interconversion. It participates in amino-acid biosynthesis; glycine biosynthesis; glycine from L-serine: step 1/1. Functionally, catalyzes the reversible interconversion of serine and glycine with tetrahydrofolate (THF) serving as the one-carbon carrier. This reaction serves as the major source of one-carbon groups required for the biosynthesis of purines, thymidylate, methionine, and other important biomolecules. Also exhibits THF-independent aldolase activity toward beta-hydroxyamino acids, producing glycine and aldehydes, via a retro-aldol mechanism. The polypeptide is Serine hydroxymethyltransferase (Gluconobacter oxydans (strain 621H) (Gluconobacter suboxydans)).